The sequence spans 98 residues: Small ribosomal subunit protein bS6 (98 aa).

Belongs to the bacterial ribosomal protein bS6 family.

In terms of biological role, binds together with bS18 to 16S ribosomal RNA. This chain is Small ribosomal subunit protein bS6, found in Moorella thermoacetica (strain ATCC 39073 / JCM 9320).